The following is a 320-amino-acid chain: Cell-cell adhesion glycoprotein 64 (320 aa).

The signal sequence occupies residues 1 to 19 (MNKFITLFVLLASVSVAMS). Cystine bridges form between C39–C57, C67–C79, C73–C86, C98–C110, C104–C115, C123–C138, C132–C147, C157–C171, and C165–C176. N49 is a glycosylation site (N-linked (GlcNAc...) asparagine). N80 carries an N-linked (GlcNAc...) asparagine glycan. Residues N141 and N158 are each glycosylated (N-linked (GlcNAc...) asparagine). An N-linked (GlcNAc...) asparagine glycan is attached at N187. 2 cysteine pairs are disulfide-bonded: C188/C202 and C194/C207. N-linked (GlcNAc...) asparagine glycosylation occurs at N216. Cystine bridges form between C226/C246, C232/C234, C266/C285, and C270/C281. The GPI-like-anchor amidated serine moiety is linked to residue S298. Positions 299–320 (SATTIAFNAFVVFAIVLSVLLF) are cleaved as a propeptide — removed in mature form.

Contains 18 disulfide bonds. Post-translationally, the GPI-like-anchor contains a phosphoceramide group, rather than a phosphatidyl group.

Its subcellular location is the cell membrane. Cell-cell adhesion during development. This is Cell-cell adhesion glycoprotein 64 from Heterostelium pallidum (Cellular slime mold).